The primary structure comprises 913 residues: Translation initiation factor IF-2 (913 aa).

The interval 1–322 is disordered; the sequence is MTDNNDDKTL…QEKFRRSQMQ (322 aa). Positions 60–113 are enriched in low complexity; that stretch reads VQPVVAAPKPAAPAPVAARPQAPQPRIHQPGGQQQRPGSSQSQQRSGSSAPQQR. Over residues 131–180 the composition is skewed to basic and acidic residues; it reads MEARRRALMEAQARDVVEAKQRAEDEARRKVEEEQRIAAEKMEAANRAAE. 3 stretches are compositionally biased toward low complexity: residues 181–195, 203–238, and 261–277; these read EAAA…PAAE, ERPA…AAAP, and PARG…PAAR. The region spanning 411 to 578 is the tr-type G domain; that stretch reads SRPPVVTIMG…AILLQAEILD (168 aa). A G1 region spans residues 420–427; sequence GHVDHGKT. 420–427 serves as a coordination point for GTP; sequence GHVDHGKT. The G2 stretch occupies residues 445 to 449; that stretch reads GITQH. Residues 466 to 469 are G3; sequence DTPG. GTP contacts are provided by residues 466 to 470 and 520 to 523; these read DTPGH and NKID. Residues 520-523 are G4; that stretch reads NKID. The segment at 556–558 is G5; sequence SAK.

Belongs to the TRAFAC class translation factor GTPase superfamily. Classic translation factor GTPase family. IF-2 subfamily.

The protein localises to the cytoplasm. Functionally, one of the essential components for the initiation of protein synthesis. Protects formylmethionyl-tRNA from spontaneous hydrolysis and promotes its binding to the 30S ribosomal subunits. Also involved in the hydrolysis of GTP during the formation of the 70S ribosomal complex. In Agrobacterium fabrum (strain C58 / ATCC 33970) (Agrobacterium tumefaciens (strain C58)), this protein is Translation initiation factor IF-2.